The primary structure comprises 329 residues: Cytosolic arginine sensor for mTORC1 subunit 2 (329 aa).

2 ACT domains span residues 72–140 (ADAT…HTLS) and 262–322 (ELWK…HALK).

Belongs to the GATS family. In terms of assembly, forms homodimers and heterodimers with CASTOR1. Interacts with the GATOR2 complex which is composed of MIOS, SEC13, SEH1L, WDR24 and WDR59; the interaction is not regulated by arginine.

The protein resides in the cytoplasm. The protein localises to the cytosol. In terms of biological role, functions as a negative regulator of the TORC1 signaling pathway through the GATOR complex. As part of homodimers or heterodimers with CASTOR1, directly binds and inhibits the GATOR subcomplex GATOR2 and thereby mTORC1. Does not directly bind arginine, but binding of arginine to CASTOR1 disrupts the interaction of CASTOR2-containing heterodimers with GATOR2 which can in turn activate mTORC1 and the TORC1 signaling pathway. The protein is Cytosolic arginine sensor for mTORC1 subunit 2 of Mus musculus (Mouse).